Here is a 156-residue protein sequence, read N- to C-terminus: MRIHLIAVGERMPAWVNAAYAEYANRLPAECSLNLKEIPAVKRGKNADLARIAETEGARMLEAIPKDCLVVALDEKGRSFSTAELSRRLDDWMHSGRDLALLVGGPEGLTDACRARADLVWSLSPLTFPHPLVRVILAEQVYRAWSLLRGHPYHRE.

Residues Leu-73, Gly-104, and 123 to 128 each bind S-adenosyl-L-methionine; that span reads LSPLTF.

It belongs to the RNA methyltransferase RlmH family. Homodimer.

It is found in the cytoplasm. It carries out the reaction pseudouridine(1915) in 23S rRNA + S-adenosyl-L-methionine = N(3)-methylpseudouridine(1915) in 23S rRNA + S-adenosyl-L-homocysteine + H(+). Its function is as follows. Specifically methylates the pseudouridine at position 1915 (m3Psi1915) in 23S rRNA. In Thioalkalivibrio sulfidiphilus (strain HL-EbGR7), this protein is Ribosomal RNA large subunit methyltransferase H.